We begin with the raw amino-acid sequence, 440 residues long: Cyclic dipeptide prenyltransferase (440 aa).

The interval 1–33 is disordered; sequence MDGEMTASPPDISACDTSAVDEQTGQSGQSQAP. A compositionally biased stretch (polar residues) spans 20-32; the sequence is VDEQTGQSGQSQA. Thr108 and Glu116 together coordinate substrate. Residues Arg129, Lys219, and Tyr221 each coordinate dimethylallyl diphosphate. Phe223 is a binding site for substrate. Residues Lys286, Tyr288, Tyr366, Tyr431, and Tyr435 each contribute to the dimethylallyl diphosphate site.

It belongs to the tryptophan dimethylallyltransferase family.

The enzyme catalyses harmol + dimethylallyl diphosphate = 6-(3-dimethylallyl)harmol + diphosphate. The catalysed reaction is an N-terminal L-tryptophanyl-L-alpha-aminoacyl-[peptide] + H2O = an N-terminal L-alpha-aminoacyl-[peptide] + L-tryptophan. It catalyses the reaction (R)-benzodiazepinedione + dimethylallyl diphosphate = (2S,3R,11R)-aszonalenin + diphosphate. It carries out the reaction (S)-benzodiazepinedione + dimethylallyl diphosphate = (2S,3R,11S)-aszonalenin + diphosphate. In terms of biological role, prenyltransferase that catalyzes reverse prenylation at position N-1 of tryptophan-containing cyclic dipeptides. Accepts only dimethylallyl diphosphate (DMAPP) as the prenyl donor but shows broad substrate specificities toward its aromatic substrates. Also shows tryptophan aminopeptidase activity with preference for linear peptides containing a tryptophanyl moiety at the N-terminus. This chain is Cyclic dipeptide prenyltransferase, found in Aspergillus fumigatus (Neosartorya fumigata).